Here is a 130-residue protein sequence, read N- to C-terminus: Small ribosomal subunit protein uS8 (130 aa).

Belongs to the universal ribosomal protein uS8 family. As to quaternary structure, part of the 30S ribosomal subunit. Contacts proteins S5 and S12.

Its function is as follows. One of the primary rRNA binding proteins, it binds directly to 16S rRNA central domain where it helps coordinate assembly of the platform of the 30S subunit. The chain is Small ribosomal subunit protein uS8 from Vibrio cholerae serotype O1 (strain ATCC 39541 / Classical Ogawa 395 / O395).